A 118-amino-acid polypeptide reads, in one-letter code: Large ribosomal subunit protein uL18 (118 aa).

The protein belongs to the universal ribosomal protein uL18 family. As to quaternary structure, part of the 50S ribosomal subunit; part of the 5S rRNA/L5/L18/L25 subcomplex. Contacts the 5S and 23S rRNAs.

In terms of biological role, this is one of the proteins that bind and probably mediate the attachment of the 5S RNA into the large ribosomal subunit, where it forms part of the central protuberance. This is Large ribosomal subunit protein uL18 from Caulobacter sp. (strain K31).